A 205-amino-acid chain; its full sequence is Large ribosomal subunit protein uL4 (205 aa).

Residues 43-95 (RSGNRAQKDRAEVKHSTKKPWRQKGTGRARAGMTSSPLWRGGGRAFPNSPEEN) form a disordered region. Over residues 48 to 57 (AQKDRAEVKH) the composition is skewed to basic and acidic residues. The segment covering 58 to 69 (STKKPWRQKGTG) has biased composition (basic residues).

The protein belongs to the universal ribosomal protein uL4 family. In terms of assembly, part of the 50S ribosomal subunit.

One of the primary rRNA binding proteins, this protein initially binds near the 5'-end of the 23S rRNA. It is important during the early stages of 50S assembly. It makes multiple contacts with different domains of the 23S rRNA in the assembled 50S subunit and ribosome. In terms of biological role, forms part of the polypeptide exit tunnel. The sequence is that of Large ribosomal subunit protein uL4 from Bordetella pertussis (strain Tohama I / ATCC BAA-589 / NCTC 13251).